The sequence spans 383 residues: Acetyl-CoA acetyltransferase (383 aa).

C85 (acyl-thioester intermediate) is an active-site residue. Residues C206, S207, I209, and K328 each coordinate CoA. H332 (proton acceptor) is an active-site residue.

It belongs to the thiolase-like superfamily. Thiolase family. Interacts with HMG-CoA synthase (HMGCS) that catalyzes the second step in the pathway and with a DUF35 protein. The acetoacetyl-CoA thiolase/HMG-CoA synthase complex channels the intermediate via a fused CoA-binding site, which allows for efficient coupling of the endergonic thiolase reaction with the exergonic HMGCS reaction.

It carries out the reaction 2 acetyl-CoA = acetoacetyl-CoA + CoA. Its pathway is metabolic intermediate biosynthesis; (R)-mevalonate biosynthesis; (R)-mevalonate from acetyl-CoA: step 1/3. Catalyzes the condensation of two acetyl-coA molecules into acetoacetyl-CoA. Functions in the mevalonate (MVA) pathway leading to isopentenyl diphosphate (IPP), a key precursor for the biosynthesis of isoprenoid compounds that are building blocks of archaeal membrane lipids. The sequence is that of Acetyl-CoA acetyltransferase from Methanothermobacter thermautotrophicus (strain ATCC 29096 / DSM 1053 / JCM 10044 / NBRC 100330 / Delta H) (Methanobacterium thermoautotrophicum).